Here is a 240-residue protein sequence, read N- to C-terminus: Manganese transport system ATP-binding protein MntB (240 aa).

In terms of domain architecture, ABC transporter spans 1-233 (MEIQGLTIAY…KIQFAYGDAP (233 aa)). ATP is bound at residue 33–40 (GPNGAGKS).

Belongs to the ABC transporter superfamily.

The protein resides in the cell membrane. In terms of biological role, this protein is probably a component of a manganese permease, a binding protein-dependent, ATP-driven transport system. Probably responsible for energy coupling to the transport system. The polypeptide is Manganese transport system ATP-binding protein MntB (mntB) (Listeria monocytogenes serovar 1/2a (strain ATCC BAA-679 / EGD-e)).